The chain runs to 150 residues: Large ribosomal subunit protein bL9 (150 aa).

It belongs to the bacterial ribosomal protein bL9 family.

Binds to the 23S rRNA. This chain is Large ribosomal subunit protein bL9, found in Verminephrobacter eiseniae (strain EF01-2).